Reading from the N-terminus, the 473-residue chain is Sensor histidine kinase YclK (473 aa).

Topologically, residues 1–9 (MMKIKYLYQ) are cytoplasmic. The chain crosses the membrane as a helical span at residues 10–30 (LLLSHISILILAFVIIISLFS). The Extracellular portion of the chain corresponds to 31-164 (HFVKEFAYQN…GVEQMVNQVN (134 aa)). Residues 165 to 185 (LYMFYAVISTLVITILVSWLL) traverse the membrane as a helical segment. The Cytoplasmic segment spans residues 186–473 (SKFHVKRIQK…IRLPLTAKQQ (288 aa)). In terms of domain architecture, HAMP spans 187–239 (KFHVKRIQKLREATDKVASGDYDIHLENSYGDEIGVLASDFNIMAKKLKQSRD). The Histidine kinase domain occupies 254 to 470 (DVSHELKTPL…KFIIRLPLTA (217 aa)). His257 carries the post-translational modification Phosphohistidine; by autocatalysis.

Its subcellular location is the cell membrane. It carries out the reaction ATP + protein L-histidine = ADP + protein N-phospho-L-histidine.. Its function is as follows. Could be member of the two-component regulatory system YclK/YclJ. Potentially phosphorylates YclJ. The chain is Sensor histidine kinase YclK (yclK) from Bacillus subtilis (strain 168).